A 216-amino-acid chain; its full sequence is Probable calcium-binding protein CML35 (216 aa).

The segment at 18 to 58 (TKSKASVSRSEPSSFSSNASSSSSDGSYGNLKQGPTATPIS) is disordered. A compositionally biased stretch (low complexity) spans 23 to 44 (SVSRSEPSSFSSNASSSSSDGS). 4 consecutive EF-hand domains span residues 66–101 (DFYT…LSHE), 103–138 (PSQE…TSGE), 141–176 (VETE…IGDE), and 178–213 (CTLE…AMND). Ca(2+) contacts are provided by aspartate 79, aspartate 81, aspartate 83, and aspartate 90. Aspartate 154, aspartate 156, asparagine 158, lysine 160, glutamate 165, aspartate 191, asparagine 193, aspartate 195, and aspartate 202 together coordinate Ca(2+).

In terms of biological role, potential calcium sensor. This chain is Probable calcium-binding protein CML35 (CML35), found in Arabidopsis thaliana (Mouse-ear cress).